Consider the following 61-residue polypeptide: uncharacterized protein (61 aa).

Positions 1–40 (MRRGGEPQCDGREFRIASSPAREREDDNETAPPQTSAAQE) are disordered. Residues 9–25 (CDGREFRIASSPARERE) are compositionally biased toward basic and acidic residues.

This is an uncharacterized protein from Caenorhabditis elegans.